Here is a 516-residue protein sequence, read N- to C-terminus: Glucose-1-phosphate adenylyltransferase large subunit 1, chloroplastic/amyloplastic (516 aa).

Residues 1–45 constitute a chloroplast transit peptide; that stretch reads MQFALALDTNSGPHQIRSCEGDGIDRLEKLSIGGRKQEKALRNRC.

It belongs to the bacterial/plant glucose-1-phosphate adenylyltransferase family. As to quaternary structure, heterotetramer. As to expression, endosperm.

The protein resides in the plastid. The protein localises to the chloroplast. It localises to the amyloplast. It carries out the reaction alpha-D-glucose 1-phosphate + ATP + H(+) = ADP-alpha-D-glucose + diphosphate. It functions in the pathway glycan biosynthesis; starch biosynthesis. Its activity is regulated as follows. Activated by 3'phosphoglycerate, inhibited by orthophosphate. Allosteric regulation. In terms of biological role, this protein plays a role in synthesis of starch. It catalyzes the synthesis of the activated glycosyl donor, ADP-glucose from Glc-1-P and ATP. The chain is Glucose-1-phosphate adenylyltransferase large subunit 1, chloroplastic/amyloplastic (SH2) from Zea mays (Maize).